A 288-amino-acid chain; its full sequence is T-cell-interacting, activating receptor on myeloid cells protein 1 (288 aa).

The N-terminal stretch at 1-16 is a signal peptide; the sequence is MISRLLSLLCLRLCVG. The Extracellular portion of the chain corresponds to 17 to 258; that stretch reads QTDIPENGSP…EGYTVDNLIR (242 aa). Ig-like C2-type domains follow at residues 27–113 and 124–217; these read PKPS…HPSN and PQPS…LEIS. Cystine bridges form between Cys49–Cys97 and Cys146–Cys196. N-linked (GlcNAc...) asparagine glycosylation is found at Asn74 and Asn185. Residues 259–279 form a helical membrane-spanning segment; it reads VGVAAAILLIVGGFLVEAWHS. The Cytoplasmic segment spans residues 280-288; that stretch reads ERLSPNKPW.

In terms of assembly, interacts with Fc receptor gamma chain FCER1G. Post-translationally, N-glycosylated. In terms of tissue distribution, expressed in lung, uterus, lymph nodes, spleen, thymus and bone marrow. Expressed in bone marrow CD11b(+)Gr-1(+) granulocyte precursors and mature neutrophils.

The protein resides in the cell membrane. Its function is as follows. May act as receptor. Negatively regulates TCR-mediated CD4(+) T cell proliferation and activation, possibly by binding an unknown ligand on the T cell surface. Enhances Toll-like receptor-mediated production of pro-inflammatory cytokines by macrophages and neutrophils. The polypeptide is T-cell-interacting, activating receptor on myeloid cells protein 1 (Tarm1) (Mus musculus (Mouse)).